The following is a 567-amino-acid chain: Potassium-transporting ATPase potassium-binding subunit (567 aa).

A run of 11 helical transmembrane segments spans residues 3–23 (FIGW…VKPL), 64–84 (LTFT…IYAV), 136–156 (ALTH…MALI), 179–199 (LYVL…QGMP), 254–274 (LSNF…TNVF), 285–305 (WAIL…AYWA), 330–350 (FGIV…CGAV), 357–376 (FTAL…EIIV), 421–441 (MLAI…AVVL), 473–495 (AFGG…MFVG), and 527–547 (GGLF…LTFF).

Belongs to the KdpA family. As to quaternary structure, the system is composed of three essential subunits: KdpA, KdpB and KdpC.

Its subcellular location is the cell inner membrane. Its function is as follows. Part of the high-affinity ATP-driven potassium transport (or Kdp) system, which catalyzes the hydrolysis of ATP coupled with the electrogenic transport of potassium into the cytoplasm. This subunit binds the periplasmic potassium ions and delivers the ions to the membrane domain of KdpB through an intramembrane tunnel. The protein is Potassium-transporting ATPase potassium-binding subunit of Rhodopseudomonas palustris (strain ATCC BAA-98 / CGA009).